A 126-amino-acid chain; its full sequence is uncharacterized protein (126 aa).

Residue Thr-68 is modified to Phosphothreonine.

This is an uncharacterized protein from Pseudomonas aeruginosa (strain UCBPP-PA14).